A 106-amino-acid chain; its full sequence is Putative defensin-like protein 224 (106 aa).

The N-terminal stretch at M1 to A23 is a signal peptide. 3 disulfide bridges follow: C60–C78, C64–C84, and C68–C86.

This sequence belongs to the DEFL family.

It is found in the secreted. This Arabidopsis thaliana (Mouse-ear cress) protein is Putative defensin-like protein 224.